The chain runs to 478 residues: Septin-4 (478 aa).

The disordered stretch occupies residues 1–115; the sequence is MDHSLGWQGN…RSPWGKLDPY (115 aa). Residues Ser-28, Ser-29, and Ser-68 each carry the phosphoserine modification. Residues 84-93 are compositionally biased toward polar residues; that stretch reads PQPSDSQQYF. Residues 94–108 show a composition bias toward low complexity; sequence SAPAPLSPSSRPRSP. Residues Ser-117 and Ser-118 each carry the phosphoserine modification. The Septin-type G domain maps to 141-414; sequence KGFDFTLMVA…ENYRAQCIQS (274 aa). Positions 151–158 are G1 motif; it reads GESGLGKS. GTP is bound by residues 151–158 and Thr-185; that span reads GESGLGKS. A G3 motif region spans residues 208-211; it reads DTPG. The G4 motif stretch occupies residues 289–292; sequence AKAD. 290-298 contributes to the GTP binding site; that stretch reads KADTLTPPE. Ser-325 carries the post-translational modification Phosphoserine. Residues Gly-348 and Arg-363 each contribute to the GTP site. Positions 428 to 449 are disordered; sequence LTRESGTDFPIPAVPPGTDPET. At Ser-432 the chain carries Phosphoserine. Thr-434 is subject to Phosphothreonine. Residues 447–478 adopt a coiled-coil conformation; it reads PETEKLIREKDEELRRMQEMLHKIQRQMKETH.

This sequence belongs to the TRAFAC class TrmE-Era-EngA-EngB-Septin-like GTPase superfamily. Septin GTPase family. Septins polymerize into heterooligomeric protein complexes that form filaments, and can associate with cellular membranes, actin filaments and microtubules. GTPase activity is required for filament formation. Interacts with SEPTIN8. Component of a septin core octameric complex consisting of SEPTIN12, SEPTIN7, SEPTIN6 and SEPTIN2 or SEPTIN4 in the order 12-7-6-2-2-6-7-12 or 12-7-6-4-4-6-7-12. Interacts with SEPTIN14 (via C-terminus). Interacts with DYRK1A. Interacts with SLC6A3/DAT and SNCA/alpha-synuclein. Interacts with STX1A; in the striatum. Interacts with XIAP (via BIR3 domain) following the induction of apoptosis. Interacts with AREL1 (via HECT domain); in the cytoplasm following induction of apoptosis. As to quaternary structure, interacts with DPYSL5. Phosphorylated by DYRK1A. In terms of processing, ubiquitinated by AREL1. Post-translationally, may be phosphorylated. Expressed in the cerebral cortex, striatum, midbrain, cerebellum and spinal cord (at protein level). Expressed in the substantia nigra pars compacta, ventral tegmental area, projection fiber bundles and in axon terminals surrounding striatal neurons (at protein level). Expressed in hair follicle stem cells (at protein level). Expressed in small intestinal crypts; abundantly expressed at the crypt base (at protein level). Widely expressed in the brain and to a lesser extent in the testis, lung and liver. In terms of tissue distribution, highly expressed in the brain and testis and, to a lesser extent in the heart, lung and kidney. In the brain, abundant in areas of high cell density, particularly in the stria terminalis. Expressed in the entorhinal, temporal and visual cortices and the hippocampus of the brain where is colocalizes with DYRK1A in postnatal day 1 and adult mice. Expressed and extensively colocalizes with DYRK1A in apical dendrites of pyramidal cells. As to expression, predominantly expressed in embryonic brain and dorsal root ganglion neurons. Expressed in LGR5-positive intestinal stem cells and lysozyme-positive Paneth cells (at protein level). Expressed in the brain and testis.

It is found in the cytoplasm. It localises to the cell projection. Its subcellular location is the cilium. The protein localises to the flagellum. The protein resides in the cytoplasmic vesicle. It is found in the secretory vesicle. It localises to the axon. Its subcellular location is the dendrite. The protein localises to the perikaryon. The protein resides in the synapse. It is found in the mitochondrion. It localises to the cytosol. Its function is as follows. Filament-forming cytoskeletal GTPase. Pro-apoptotic protein involved in LGR5-positive intestinal stem cell and Paneth cell expansion in the intestines, via its interaction with XIAP. May also play a role in the regulation of cell fate in the intestine. Positive regulator of apoptosis involved in hematopoietic stem cell homeostasis; via its interaction with XIAP. Negative regulator of repair and hair follicle regeneration in response to injury, due to inhibition of hair follicle stem cell proliferation, potentially via its interaction with XIAP. Plays an important role in male fertility and sperm motility. During spermiogenesis, essential for the establishment of the annulus (a fibrous ring structure connecting the midpiece and the principal piece of the sperm flagellum) which is a requisite for the structural and mechanical integrity of the sperm. Involved in the migration of cortical neurons and the formation of neuron leading processes during embryonic development. Required for dopaminergic metabolism in presynaptic autoreceptors; potentially via activity as a presynaptic scaffold protein. The protein is Septin-4 of Mus musculus (Mouse).